The following is a 101-amino-acid chain: Small ribosomal subunit protein bS18c (101 aa).

Over residues Met1–Leu19 the composition is skewed to basic residues. A disordered region spans residues Met1 to Asp26.

It belongs to the bacterial ribosomal protein bS18 family. In terms of assembly, part of the 30S ribosomal subunit.

It localises to the plastid. It is found in the chloroplast. The sequence is that of Small ribosomal subunit protein bS18c from Phalaenopsis aphrodite subsp. formosana (Moth orchid).